We begin with the raw amino-acid sequence, 93 residues long: Pyrimidine/purine nucleoside phosphorylase (93 aa).

The protein belongs to the nucleoside phosphorylase PpnP family.

It catalyses the reaction a purine D-ribonucleoside + phosphate = a purine nucleobase + alpha-D-ribose 1-phosphate. The catalysed reaction is adenosine + phosphate = alpha-D-ribose 1-phosphate + adenine. The enzyme catalyses cytidine + phosphate = cytosine + alpha-D-ribose 1-phosphate. It carries out the reaction guanosine + phosphate = alpha-D-ribose 1-phosphate + guanine. It catalyses the reaction inosine + phosphate = alpha-D-ribose 1-phosphate + hypoxanthine. The catalysed reaction is thymidine + phosphate = 2-deoxy-alpha-D-ribose 1-phosphate + thymine. The enzyme catalyses uridine + phosphate = alpha-D-ribose 1-phosphate + uracil. It carries out the reaction xanthosine + phosphate = alpha-D-ribose 1-phosphate + xanthine. Catalyzes the phosphorolysis of diverse nucleosides, yielding D-ribose 1-phosphate and the respective free bases. Can use uridine, adenosine, guanosine, cytidine, thymidine, inosine and xanthosine as substrates. Also catalyzes the reverse reactions. The protein is Pyrimidine/purine nucleoside phosphorylase of Hahella chejuensis (strain KCTC 2396).